Here is a 516-residue protein sequence, read N- to C-terminus: Protein psiC (516 aa).

The first 19 residues, 1-19 (MKILILSFFLILGINLVFC), serve as a signal peptide directing secretion. Residues 109-249 (ESKDEPGIYV…YDACGVCLGK (141 aa)) enclose the PA14 domain. N134, N234, N250, N284, N333, N357, and N367 each carry an N-linked (GlcNAc...) asparagine glycan. The segment covering 418-427 (DIIIDSSSDI) has biased composition (low complexity). The tract at residues 418–465 (DIIIDSSSDIPIPTLSPSPQPSRFPTDTPTNTPMPPTRPPTPTEDPKI) is disordered. Residues 449–460 (TPMPPTRPPTPT) show a composition bias toward pro residues.

This sequence belongs to the prespore-cell-inducing factor family.

Its subcellular location is the secreted. This chain is Protein psiC (psiC), found in Dictyostelium discoideum (Social amoeba).